The primary structure comprises 194 residues: 5-formyltetrahydrofolate cyclo-ligase (194 aa).

ATP is bound by residues 6–10 (KSQLR), 139–146 (GRGAGFYD), and D177.

Belongs to the 5-formyltetrahydrofolate cyclo-ligase family.

The catalysed reaction is (6S)-5-formyl-5,6,7,8-tetrahydrofolate + ATP = (6R)-5,10-methenyltetrahydrofolate + ADP + phosphate. The protein operates within one-carbon metabolism; tetrahydrofolate interconversion. Functionally, involved in the removal of 5-formyltetrahydrofolate. In vitro, it is a potent inhibitor of various folate-dependent enzymes in the C1 metabolism network and in vivo it might function as a folate storage. 5-formyltetrahydrofolate is also used as an antifolate rescue agent in cancer chemotherapy. Catalyzes the irreversible ATP-dependent transformation of 5-formyltetrahydrofolate (5-CHO-THF) to form 5,10-methenyltetrahydrofolate (5,10-CH=THF). The reverse reaction is catalyzed by the serine hydroxymethyltransferase GlyA (SHMT). This chain is 5-formyltetrahydrofolate cyclo-ligase, found in Mycolicibacterium smegmatis (strain ATCC 700084 / mc(2)155) (Mycobacterium smegmatis).